The following is a 407-amino-acid chain: Peptidase T (407 aa).

His-82 provides a ligand contact to Zn(2+). Asp-84 is a catalytic residue. Position 143 (Asp-143) interacts with Zn(2+). Glu-177 acts as the Proton acceptor in catalysis. Positions 178, 200, and 382 each coordinate Zn(2+).

It belongs to the peptidase M20B family. It depends on Zn(2+) as a cofactor.

Its subcellular location is the cytoplasm. The catalysed reaction is Release of the N-terminal residue from a tripeptide.. Its function is as follows. Cleaves the N-terminal amino acid of tripeptides. This is Peptidase T from Streptococcus pyogenes serotype M28 (strain MGAS6180).